We begin with the raw amino-acid sequence, 362 residues long: Poly(rC)-binding protein 2 (362 aa).

KH domains follow at residues 13–75 (TLTI…FAMI) and 97–162 (PVTL…VKQI). Lysine 115 participates in a covalent cross-link: Glycyl lysine isopeptide (Lys-Gly) (interchain with G-Cter in SUMO2). Serine 169 is subject to Phosphoserine. Lysine 181 participates in a covalent cross-link: Glycyl lysine isopeptide (Lys-Gly) (interchain with G-Cter in SUMO2). 2 positions are modified to phosphoserine: serine 185 and serine 268. Positions 284–348 (TTSHELTIPN…ASISLAQYLI (65 aa)) constitute a KH 3 domain. Lysine 319 is covalently cross-linked (Glycyl lysine isopeptide (Lys-Gly) (interchain with G-Cter in SUMO2)). 2 positions are modified to phosphoserine: serine 361 and serine 362.

As to quaternary structure, identified in a mRNP complex, at least composed of DHX9, DDX3X, ELAVL1, HNRNPU, IGF2BP1, ILF3, PABPC1, PCBP2, PTBP2, STAU1, STAU2, SYNCRIP and YBX1. Interacts with IFIH1 and RNF135. Interacts with MAVS (via C-terminus) and ITCH (via WW domains). Interacts with CGAS; preventing the formation of liquid-like droplets in which CGAS is activated. Post-translationally, phosphorylated. The non-phosphorylated form(s) exhibited the strongest poly(rC)-binding activity.

Its subcellular location is the nucleus. It localises to the cytoplasm. Single-stranded nucleic acid binding protein that binds preferentially to oligo dC. Major cellular poly(rC)-binding protein. Also binds poly(rU). Acts as a negative regulator of antiviral signaling. Negatively regulates cellular antiviral responses mediated by MAVS signaling. It acts as an adapter between MAVS and the E3 ubiquitin ligase ITCH, therefore triggering MAVS ubiquitination and degradation. Negativeley regulates the cGAS-STING pathway via interaction with CGAS, preventing the formation of liquid-like droplets in which CGAS is activated. Together with PCBP1, required for erythropoiesis, possibly by regulating mRNA splicing. The protein is Poly(rC)-binding protein 2 (Pcbp2) of Mus musculus (Mouse).